Consider the following 97-residue polypeptide: Large ribosomal subunit protein uL23 (97 aa).

Belongs to the universal ribosomal protein uL23 family. In terms of assembly, part of the 50S ribosomal subunit. Contacts protein L29, and trigger factor when it is bound to the ribosome.

Functionally, one of the early assembly proteins it binds 23S rRNA. One of the proteins that surrounds the polypeptide exit tunnel on the outside of the ribosome. Forms the main docking site for trigger factor binding to the ribosome. The sequence is that of Large ribosomal subunit protein uL23 from Anaeromyxobacter dehalogenans (strain 2CP-1 / ATCC BAA-258).